An 803-amino-acid polypeptide reads, in one-letter code: MNDMNLSPVGMEQLSSSSVSNALPVSGSHLGLAASPSHSAIPAPGLPVAIPNLGPSLSSLPSALSLMLPVGIGDRGVMCGLPERNYTLPPPPYPHLESSYFRTILPGILSYLADRPPPQYIHPNSINVDGNTALSITNNPSALDPYQANGNVGLELGIVSIDSRSVNTHGAQSLHPNDGHEVALDTTITMENVSRVTSPISTDGMAEELTMDGVTGEHPQIPNGSRSHEPLSVDSVSNSLTAEAVGHGGVIPIHGNGLELPVVMETDHIANRVNGMSDSTLSDSIHTVAMSTNSVSVALSTSHNLASLESVSLHEVGLSLEPVAVSSITQEVAMGTGHVDVSSDSLSFVPSSLQMEDSNSNKENMATLFTIWCTLCDRAYPSDCPDHGPVTFVPDTPIESRARLSLPKQLVLRQSIVGTDVVGVLPLIGVWTAETIPVRTCFGPLIGQQSHSLEVAEWTDKAVNHVWKIYHTGVLEFCIITTDENECNWMMFVRKARNREEQNLVAYPHDGKIYFCTSQDIPPESELLFYYSRNYAQQIGVPEHPDVHLCNCGKECSSYSEFKAHLTSHIHNHLPSQGHSSSHGPSHSKERKWKCSMCPQAFISPSKLHVHFMGHMGMKPHKCDFCSKAFSDPSNLRTHLKIHTGQKNYRCTLCDKSFTQKAHLESHMVIHTGEKNLKCDYCDKLFMRRQDLKQHVLIHTQERQIKCPKCDKLFLRTNHLKKHLNSHEGKRDYVCEKCTKAYLTKYHLTRHLKTCKEPSSSSSAQEEEDDESEEEDLADSMRTEDCRMGSAVYSTDESLSAHK.

The 125-residue stretch at 408-532 folds into the SET domain; it reads KQLVLRQSIV…PESELLFYYS (125 aa). 5 C2H2-type zinc fingers span residues 593–615, 621–643, 649–671, 677–699, and 705–727; these read WKCS…FMGH, HKCD…LKIH, YRCT…MVIH, LKCD…VLIH, and IKCP…LNSH. The C2H2-type 6; degenerate zinc finger occupies 733–755; sequence YVCEKCTKAYLTKYHLTRHLKTC. Residues 757–803 form a disordered region; sequence EPSSSSSAQEEEDDESEEEDLADSMRTEDCRMGSAVYSTDESLSAHK. Acidic residues predominate over residues 765-778; the sequence is QEEEDDESEEEDLA. Over residues 792-803 the composition is skewed to polar residues; the sequence is VYSTDESLSAHK.

The protein belongs to the class V-like SAM-binding methyltransferase superfamily.

It is found in the nucleus. In terms of biological role, may function as a transcription factor involved in cell differentiation. This is PR domain zinc finger protein 4 (Prdm4) from Mus musculus (Mouse).